The chain runs to 1038 residues: Translation initiation factor IF-2 (1038 aa).

Disordered regions lie at residues 39–346 (TISE…KWQE) and 403–451 (KPKA…PEKV). The segment covering 103-125 (RNTTSNAPEASVANNQIASSEAN) has biased composition (polar residues). Positions 157–176 (PQKPAAPEAEPEAQSQAPAK) are enriched in low complexity. Basic and acidic residues-rich tracts occupy residues 178 to 197 (AVEKPEKSAQPRPGKPERQP) and 226 to 243 (PILKRDRPRREDERDQAK). Low complexity predominate over residues 407–423 (ARAATAATAAPISSPTT). The segment covering 431–450 (NNRDQNRRQETEVKRERPEK) has biased composition (basic and acidic residues). In terms of domain architecture, tr-type G spans 532–705 (RRPPVVTIMG…LLVAEVGELS (174 aa)). The G1 stretch occupies residues 541-548 (GHVDHGKT). Position 541-548 (541-548 (GHVDHGKT)) interacts with GTP. The tract at residues 566–570 (GITQH) is G2. The segment at 591–594 (DTPG) is G3. GTP is bound by residues 591 to 595 (DTPGH) and 645 to 648 (NKID). A G4 region spans residues 645–648 (NKID). Residues 681–683 (SAI) form a G5 region.

It belongs to the TRAFAC class translation factor GTPase superfamily. Classic translation factor GTPase family. IF-2 subfamily.

The protein resides in the cytoplasm. Functionally, one of the essential components for the initiation of protein synthesis. Protects formylmethionyl-tRNA from spontaneous hydrolysis and promotes its binding to the 30S ribosomal subunits. Also involved in the hydrolysis of GTP during the formation of the 70S ribosomal complex. The polypeptide is Translation initiation factor IF-2 (Trichormus variabilis (strain ATCC 29413 / PCC 7937) (Anabaena variabilis)).